A 323-amino-acid polypeptide reads, in one-letter code: Putative gluconeogenesis factor (323 aa).

Belongs to the gluconeogenesis factor family.

Its subcellular location is the cytoplasm. In terms of biological role, required for morphogenesis under gluconeogenic growth conditions. This is Putative gluconeogenesis factor from Thermoanaerobacterium thermosulfurigenes (Clostridium thermosulfurogenes).